The sequence spans 208 residues: Thymidylate kinase (208 aa).

Gly11–Ser18 is a binding site for ATP.

The protein belongs to the thymidylate kinase family.

It catalyses the reaction dTMP + ATP = dTDP + ADP. Its function is as follows. Phosphorylation of dTMP to form dTDP in both de novo and salvage pathways of dTTP synthesis. The sequence is that of Thymidylate kinase (tmk) from Caulobacter vibrioides (strain ATCC 19089 / CIP 103742 / CB 15) (Caulobacter crescentus).